The following is a 347-amino-acid chain: DNA-directed RNA polymerase subunit alpha (347 aa).

The segment at 1 to 243 (MLIKQGERLI…DQISVFINFD (243 aa)) is alpha N-terminal domain (alpha-NTD). Positions 260–347 (VNEHLFKSID…EWKRKQQNEA (88 aa)) are alpha C-terminal domain (alpha-CTD).

The protein belongs to the RNA polymerase alpha chain family. Homodimer. The RNAP catalytic core consists of 2 alpha, 1 beta, 1 beta' and 1 omega subunit. When a sigma factor is associated with the core the holoenzyme is formed, which can initiate transcription.

The catalysed reaction is RNA(n) + a ribonucleoside 5'-triphosphate = RNA(n+1) + diphosphate. In terms of biological role, DNA-dependent RNA polymerase catalyzes the transcription of DNA into RNA using the four ribonucleoside triphosphates as substrates. The polypeptide is DNA-directed RNA polymerase subunit alpha (Desulfovibrio desulfuricans (strain ATCC 27774 / DSM 6949 / MB)).